Consider the following 217-residue polypeptide: Phosphatase MT3486 (217 aa).

The active-site Nucleophile is the D9.

Belongs to the HAD-like hydrolase superfamily.

Functionally, able to hydrolyze geranyl diphosphate (GPP), farnesyl diphosphate (FPP) and geranylgeranyl diphosphate (GGPP) to respectively yield geraniol, farnesol and geranylgeraniol. In Mycobacterium tuberculosis (strain CDC 1551 / Oshkosh), this protein is Phosphatase MT3486.